The following is a 580-amino-acid chain: Tetratricopeptide repeat protein 39C (580 aa).

TPR repeat units follow at residues 312-345 (SLFMFFKGRIQRLECQINSALTSFHTALELAVDQ), 350-383 (HVCLYEIGWCSMIELNFKDAFDSFERLKNESRWS), and 482-515 (GLKHLLLGAIHKCLGNSQDALQFFQRAARDELCR).

Belongs to the TTC39 family.

The chain is Tetratricopeptide repeat protein 39C (Ttc39c) from Mus musculus (Mouse).